Here is a 406-residue protein sequence, read N- to C-terminus: Dual-specificity RNA methyltransferase RlmN (406 aa).

E119 functions as the Proton acceptor in the catalytic mechanism. In terms of domain architecture, Radical SAM core spans 125–370; sequence DKGRGTLCVS…AMVRRTRGDD (246 aa). C132 and C375 form a disulfide bridge. Residues C139, C143, and C146 each contribute to the [4Fe-4S] cluster site. Residues 192–193, S224, 246–248, and N332 contribute to the S-adenosyl-L-methionine site; these read GE and SLH. The S-methylcysteine intermediate role is filled by C375.

It belongs to the radical SAM superfamily. RlmN family. It depends on [4Fe-4S] cluster as a cofactor.

The protein resides in the cytoplasm. The enzyme catalyses adenosine(2503) in 23S rRNA + 2 reduced [2Fe-2S]-[ferredoxin] + 2 S-adenosyl-L-methionine = 2-methyladenosine(2503) in 23S rRNA + 5'-deoxyadenosine + L-methionine + 2 oxidized [2Fe-2S]-[ferredoxin] + S-adenosyl-L-homocysteine. It catalyses the reaction adenosine(37) in tRNA + 2 reduced [2Fe-2S]-[ferredoxin] + 2 S-adenosyl-L-methionine = 2-methyladenosine(37) in tRNA + 5'-deoxyadenosine + L-methionine + 2 oxidized [2Fe-2S]-[ferredoxin] + S-adenosyl-L-homocysteine. Functionally, specifically methylates position 2 of adenine 2503 in 23S rRNA and position 2 of adenine 37 in tRNAs. m2A2503 modification seems to play a crucial role in the proofreading step occurring at the peptidyl transferase center and thus would serve to optimize ribosomal fidelity. The protein is Dual-specificity RNA methyltransferase RlmN of Xylella fastidiosa (strain M12).